The primary structure comprises 693 residues: Translation initiation factor IF-2 (693 aa).

Positions 181-349 constitute a tr-type G domain; it reads PRPPVVTVMG…MILLVAEMNE (169 aa). Residues 190–197 form a G1 region; that stretch reads GHVDHGKT. 190–197 lines the GTP pocket; that stretch reads GHVDHGKT. The segment at 215–219 is G2; the sequence is GITQS. The interval 236 to 239 is G3; that stretch reads DTPG. GTP is bound by residues 236-240 and 290-293; these read DTPGH and NKID. Residues 290–293 form a G4 region; the sequence is NKID. Residues 327 to 329 form a G5 region; sequence SAR.

Belongs to the TRAFAC class translation factor GTPase superfamily. Classic translation factor GTPase family. IF-2 subfamily.

The protein localises to the cytoplasm. One of the essential components for the initiation of protein synthesis. Protects formylmethionyl-tRNA from spontaneous hydrolysis and promotes its binding to the 30S ribosomal subunits. Also involved in the hydrolysis of GTP during the formation of the 70S ribosomal complex. The protein is Translation initiation factor IF-2 of Thermotoga petrophila (strain ATCC BAA-488 / DSM 13995 / JCM 10881 / RKU-1).